Consider the following 596-residue polypeptide: Elongation factor 4 (596 aa).

The tr-type G domain occupies 2–184 (KHIRNFSIIA…VIVAQIPPPE (183 aa)). Residues 14–19 (DHGKST) and 131–134 (NKID) each bind GTP.

This sequence belongs to the TRAFAC class translation factor GTPase superfamily. Classic translation factor GTPase family. LepA subfamily.

The protein resides in the cell inner membrane. The enzyme catalyses GTP + H2O = GDP + phosphate + H(+). In terms of biological role, required for accurate and efficient protein synthesis under certain stress conditions. May act as a fidelity factor of the translation reaction, by catalyzing a one-codon backward translocation of tRNAs on improperly translocated ribosomes. Back-translocation proceeds from a post-translocation (POST) complex to a pre-translocation (PRE) complex, thus giving elongation factor G a second chance to translocate the tRNAs correctly. Binds to ribosomes in a GTP-dependent manner. This is Elongation factor 4 from Shewanella woodyi (strain ATCC 51908 / MS32).